The chain runs to 141 residues: Hemoglobin subunit alpha (141 aa).

One can recognise a Globin domain in the interval 1–141 (VLSPADKTNV…VSTVLTSKYR (141 aa)). At serine 3 the chain carries Phosphoserine. Lysine 7 carries the post-translational modification N6-succinyllysine. Threonine 8 carries the post-translational modification Phosphothreonine. Lysine 11 carries the N6-succinyllysine modification. The residue at position 16 (lysine 16) is an N6-acetyllysine; alternate. The residue at position 16 (lysine 16) is an N6-succinyllysine; alternate. A Phosphotyrosine modification is found at tyrosine 24. Phosphoserine is present on serine 35. Lysine 40 is modified (N6-succinyllysine). The residue at position 49 (serine 49) is a Phosphoserine. Histidine 58 serves as a coordination point for O2. Histidine 87 is a binding site for heme b. Serine 102 bears the Phosphoserine mark. At threonine 108 the chain carries Phosphothreonine. Residues serine 124 and serine 131 each carry the phosphoserine modification. Phosphothreonine occurs at positions 134 and 137. Serine 138 is subject to Phosphoserine.

The protein belongs to the globin family. In terms of assembly, heterotetramer of two alpha chains and two beta chains. In terms of tissue distribution, red blood cells.

In terms of biological role, involved in oxygen transport from the lung to the various peripheral tissues. This Otospermophilus beecheyi (California ground squirrel) protein is Hemoglobin subunit alpha.